The primary structure comprises 121 residues: Protein YxiB (121 aa).

The protein is Protein YxiB (yxiB) of Bacillus subtilis (strain 168).